The sequence spans 486 residues: Cardiolipin synthase A (486 aa).

Transmembrane regions (helical) follow at residues 3 to 23 (TFYT…IAGV) and 38 to 58 (MAWL…YLSV). PLD phosphodiesterase domains are found at residues 219–246 (MDLR…VDPR) and 399–426 (EGGL…DMRS). Catalysis depends on residues His224, Lys226, Asp231, His404, Lys406, and Asp411.

Belongs to the phospholipase D family. Cardiolipin synthase subfamily. ClsA sub-subfamily.

It localises to the cell inner membrane. It catalyses the reaction 2 a 1,2-diacyl-sn-glycero-3-phospho-(1'-sn-glycerol) = a cardiolipin + glycerol. Its function is as follows. Catalyzes the reversible phosphatidyl group transfer from one phosphatidylglycerol molecule to another to form cardiolipin (CL) (diphosphatidylglycerol) and glycerol. The chain is Cardiolipin synthase A from Salmonella choleraesuis (strain SC-B67).